Reading from the N-terminus, the 89-residue chain is uncharacterized protein (89 aa).

To M.tuberculosis Rv3402c.

This is an uncharacterized protein from Mycobacterium tuberculosis (strain CDC 1551 / Oshkosh).